Here is a 126-residue protein sequence, read N- to C-terminus: Fluoride-specific ion channel FluC (126 aa).

Helical transmembrane passes span 1-21 (MIVI…FGLD), 40-60 (LATL…GGFA), 72-92 (AISI…VATV), and 104-124 (MVNI…GLSL). Positions 79 and 82 each coordinate Na(+).

It belongs to the fluoride channel Fluc/FEX (TC 1.A.43) family.

It is found in the cell membrane. The catalysed reaction is fluoride(in) = fluoride(out). With respect to regulation, na(+) is not transported, but it plays an essential structural role and its presence is essential for fluoride channel function. Its function is as follows. Fluoride-specific ion channel. Important for reducing fluoride concentration in the cell, thus reducing its toxicity. The protein is Fluoride-specific ion channel FluC of Renibacterium salmoninarum (strain ATCC 33209 / DSM 20767 / JCM 11484 / NBRC 15589 / NCIMB 2235).